Here is a 207-residue protein sequence, read N- to C-terminus: LexA repressor (207 aa).

The segment at residues 28 to 48 is a DNA-binding region (H-T-H motif); sequence VREIGEAVGLASSSTVHGHLS. Residues Ser-130 and Lys-168 each act as for autocatalytic cleavage activity in the active site.

This sequence belongs to the peptidase S24 family. In terms of assembly, homodimer.

The catalysed reaction is Hydrolysis of Ala-|-Gly bond in repressor LexA.. In terms of biological role, represses a number of genes involved in the response to DNA damage (SOS response), including recA and lexA. In the presence of single-stranded DNA, RecA interacts with LexA causing an autocatalytic cleavage which disrupts the DNA-binding part of LexA, leading to derepression of the SOS regulon and eventually DNA repair. This chain is LexA repressor, found in Staphylococcus carnosus (strain TM300).